Here is a 165-residue protein sequence, read N- to C-terminus: Chorismate pyruvate-lyase (165 aa).

Substrate contacts are provided by Met35, Arg77, Leu115, and Glu156.

This sequence belongs to the UbiC family. As to quaternary structure, monomer.

The protein resides in the cytoplasm. It catalyses the reaction chorismate = 4-hydroxybenzoate + pyruvate. Its pathway is cofactor biosynthesis; ubiquinone biosynthesis. Its function is as follows. Removes the pyruvyl group from chorismate, with concomitant aromatization of the ring, to provide 4-hydroxybenzoate (4HB) for the ubiquinone pathway. This Salmonella agona (strain SL483) protein is Chorismate pyruvate-lyase.